The chain runs to 505 residues: Apolipoprotein N-acyltransferase (505 aa).

6 consecutive transmembrane segments (helical) span residues 15 to 46, 55 to 75, 89 to 109, 129 to 149, 161 to 181, and 192 to 212; these read AAFV…LLLL, ALIA…WVHV, LFLM…FGWL, LWLI…WLWL, FAPI…AGSL, and MACI…MQWV. The CN hydrolase domain maps to 225–471; the sequence is IQGNIEQGLK…TGVLKATVTP (247 aa). Glu264 functions as the Proton acceptor in the catalytic mechanism. Lys330 is a catalytic residue. The active-site Nucleophile is Cys382. Residues 479-499 form a helical membrane-spanning segment; it reads FLWGTTPLYLWVGLAAGFAFW.

This sequence belongs to the CN hydrolase family. Apolipoprotein N-acyltransferase subfamily.

The protein localises to the cell inner membrane. It catalyses the reaction N-terminal S-1,2-diacyl-sn-glyceryl-L-cysteinyl-[lipoprotein] + a glycerophospholipid = N-acyl-S-1,2-diacyl-sn-glyceryl-L-cysteinyl-[lipoprotein] + a 2-acyl-sn-glycero-3-phospholipid + H(+). The protein operates within protein modification; lipoprotein biosynthesis (N-acyl transfer). Functionally, catalyzes the phospholipid dependent N-acylation of the N-terminal cysteine of apolipoprotein, the last step in lipoprotein maturation. This is Apolipoprotein N-acyltransferase from Vibrio cholerae serotype O1 (strain ATCC 39315 / El Tor Inaba N16961).